An 83-amino-acid polypeptide reads, in one-letter code: uncharacterized protein (83 aa).

Transmembrane regions (helical) follow at residues 7–26 (FARF…IVSY), 36–58 (LSPL…ILPF), and 65–82 (ILTV…YLAF).

Its subcellular location is the cell membrane. This is an uncharacterized protein from Archaeoglobus fulgidus (strain ATCC 49558 / DSM 4304 / JCM 9628 / NBRC 100126 / VC-16).